Consider the following 40-residue polypeptide: Photosystem II reaction center protein J (40 aa).

Met-2 is modified (N-acetylmethionine). The Cytoplasmic portion of the chain corresponds to 2-11; sequence MSEGGRIPLW. A helical membrane pass occupies residues 12-26; the sequence is IVATVAGMGVIVIVG. Residues 27–40 are Lumenal-facing; it reads LFFYGAYAGLGSSL.

Belongs to the PsbJ family. In terms of assembly, PSII is composed of 1 copy each of membrane proteins PsbA, PsbB, PsbC, PsbD, PsbE, PsbF, PsbH, PsbI, PsbJ, PsbK, PsbL, PsbM, PsbT, PsbX, PsbY, PsbZ, Psb30/Ycf12, peripheral proteins PsbO, CyanoQ (PsbQ), PsbU, PsbV and a large number of cofactors. It forms dimeric complexes. It depends on PSII binds multiple chlorophylls, carotenoids and specific lipids. as a cofactor.

Its subcellular location is the cellular thylakoid membrane. In terms of biological role, one of the components of the core complex of photosystem II (PSII). PSII is a light-driven water:plastoquinone oxidoreductase that uses light energy to abstract electrons from H(2)O, generating O(2) and a proton gradient subsequently used for ATP formation. It consists of a core antenna complex that captures photons, and an electron transfer chain that converts photonic excitation into a charge separation. Its function is as follows. May play a regulatory role in PSII biogenesis. The chain is Photosystem II reaction center protein J from Thermosynechococcus vestitus (strain NIES-2133 / IAM M-273 / BP-1).